Here is a 121-residue protein sequence, read N- to C-terminus: MRRQEALAGTASEAGREGEQPRPAGLGCRTRAEPGGPQESRQQWKTFLYCEPHKRIKEVLEEELSIKRDECHVKSPPTVALDGIWSIRRNLPVGGTISGQQSRNSSLPQAKYYSRHGGLRR.

2 disordered regions span residues 1–41 (MRRQ…QESR) and 94–121 (GGTI…GLRR). Residues 98–108 (SGQQSRNSSLP) show a composition bias toward polar residues.

In terms of tissue distribution, predominantly expressed in tissues containing motile cilia. Also expressed in non-motile ciliated adult olfactory bulbs.

It is found in the cytoplasm. The protein resides in the cytoskeleton. Its subcellular location is the cilium basal body. This is an uncharacterized protein from Mus musculus (Mouse).